We begin with the raw amino-acid sequence, 297 residues long: UDP-N-acetylenolpyruvoylglucosamine reductase (297 aa).

In terms of domain architecture, FAD-binding PCMH-type spans 22–195 (RAGGTARYYA…LAGRFRLQRG (174 aa)). Residue arginine 169 is part of the active site. Serine 223 functions as the Proton donor in the catalytic mechanism. Glutamate 293 is an active-site residue.

This sequence belongs to the MurB family. FAD serves as cofactor.

The protein localises to the cytoplasm. The catalysed reaction is UDP-N-acetyl-alpha-D-muramate + NADP(+) = UDP-N-acetyl-3-O-(1-carboxyvinyl)-alpha-D-glucosamine + NADPH + H(+). Its pathway is cell wall biogenesis; peptidoglycan biosynthesis. Functionally, cell wall formation. The polypeptide is UDP-N-acetylenolpyruvoylglucosamine reductase (Chloroflexus aurantiacus (strain ATCC 29364 / DSM 637 / Y-400-fl)).